The sequence spans 1293 residues: DNA-directed RNA polymerase subunit beta' (1293 aa).

Zn(2+) is bound by residues cysteine 60, cysteine 62, cysteine 75, and cysteine 78. Mg(2+)-binding residues include aspartate 535, aspartate 537, and aspartate 539. Positions 877, 953, 960, and 963 each coordinate Zn(2+).

Belongs to the RNA polymerase beta' chain family. The RNAP catalytic core consists of 2 alpha, 1 beta, 1 beta' and 1 omega subunit. When a sigma factor is associated with the core the holoenzyme is formed, which can initiate transcription. Requires Mg(2+) as cofactor. Zn(2+) is required as a cofactor.

The enzyme catalyses RNA(n) + a ribonucleoside 5'-triphosphate = RNA(n+1) + diphosphate. In terms of biological role, DNA-dependent RNA polymerase catalyzes the transcription of DNA into RNA using the four ribonucleoside triphosphates as substrates. This Kineococcus radiotolerans (strain ATCC BAA-149 / DSM 14245 / SRS30216) protein is DNA-directed RNA polymerase subunit beta'.